Here is a 198-residue protein sequence, read N- to C-terminus: N-acetyltransferase 9-like protein (198 aa).

The N-acetyltransferase domain maps to 14 to 186 (IILVPYKEKH…SNNFTNLTAD (173 aa)).

Belongs to the acetyltransferase family. GNAT subfamily.

In Nematostella vectensis (Starlet sea anemone), this protein is N-acetyltransferase 9-like protein (nat9).